We begin with the raw amino-acid sequence, 508 residues long: Cytochrome P450 monooxygenase dmxR5 (508 aa).

The chain crosses the membrane as a helical span at residues 24–44; the sequence is LTLGLGAILVVLMSFLAFLSY. N-linked (GlcNAc...) asparagine glycans are attached at residues N387 and N405. Residue C451 participates in heme binding. N462 carries an N-linked (GlcNAc...) asparagine glycan. Positions 481–508 are disordered; that stretch reads EHKKSTQESGHGVPLPSKLSKFSPREEN.

It belongs to the cytochrome P450 family. It depends on heme as a cofactor.

The protein localises to the membrane. Its pathway is secondary metabolite biosynthesis. In terms of biological role, cytochrome P450 monooxygenase; part of the gene cluster that mediates the biosynthesis of the dimeric xanthones cryptosporioptides. The pathway begins with the synthesis of atrochrysone thioester by the polyketide synthase dmx-nrPKS. The atrochrysone carboxyl ACP thioesterase dmxR1 then breaks the thioester bond and releases the atrochrysone carboxylic acid from dmx-nrPKS. Atrochrysone carboxylic acid is decarboxylated by the decarboxylase dmxR15, and oxidized by the anthrone oxygenase dmxR16 to yield emodin. Emodin is then reduced to emodin hydroquinone by the oxidoreductase dmxR7. A-ring reduction by the short chain dehydrogenase dmxR18, dehydration by the scytalone dehydratase-like protein dmxR17 and probable spontaneous re-oxidation, results in overall deoxygenation to chrysophanol. Baeyer-Villiger oxidation by the Baeyer-Villiger monooxygenase (BVMO) dmxR6 then yields monodictylactone in equilibrium with monodictyphenone. In the case of the cryptosporioptides biosynthesis, monodictylactone is reduced at C-12 to an alcohol (by the short chain dehydrogenases dmxR12 or dmxR8) and hydroxylated at C-5 by dmxR9, yielding the electron-rich aromatic which could eliminate H(2)O to form the ortho-quinonemethide, followed by tautomerisation to paraquinone and complete the formal reduction to produce the 10-methylgroup. Conjugate addition of C-4a-OH to the resulting paraquinone by the monooxygenase dmxR10 then gives cyclohexadienone, which is then reduced at C-5 by the short chain dehydrogenase dmxR3 to give the dihydroxanthone. The 6,7-epoxide in the cryptosporioptides could be introduced by the cytochrome P450 monooxygenase dmxL3. The highly reducing PKS dmxL2 manufactures butyrate, which is further carboxylated by dmxL1 to form ethylmalonate. It is not yet clear whether the carboxylation occurs while the butyrate is attached to the ACP of dmxL2, but this unusual fungal metabolite could then be esterified to O-5 by the O-acetyltransferase dmxR13. Finally, dimerization performed by dmxR5 gives the observed dimers cryptosporioptides A, B and C as the final products of the pathway. The sequence is that of Cytochrome P450 monooxygenase dmxR5 from Cryptosporiopsis sp. (strain 8999).